A 121-amino-acid polypeptide reads, in one-letter code: Small ribosomal subunit protein uS13 (121 aa).

The tract at residues 91-121 is disordered; that stretch reads HRRGLPVRGQKTKNNARTRKGPVKTVANKKK.

Belongs to the universal ribosomal protein uS13 family. As to quaternary structure, part of the 30S ribosomal subunit. Forms a loose heterodimer with protein S19. Forms two bridges to the 50S subunit in the 70S ribosome.

Functionally, located at the top of the head of the 30S subunit, it contacts several helices of the 16S rRNA. In the 70S ribosome it contacts the 23S rRNA (bridge B1a) and protein L5 of the 50S subunit (bridge B1b), connecting the 2 subunits; these bridges are implicated in subunit movement. Contacts the tRNAs in the A and P-sites. In Staphylococcus haemolyticus (strain JCSC1435), this protein is Small ribosomal subunit protein uS13.